Here is a 252-residue protein sequence, read N- to C-terminus: Chaperone protein AggD (252 aa).

Positions 1–22 (MKIRRIVSTIAIALSVFTFAHA) are cleaved as a signal peptide.

The protein belongs to the periplasmic pilus chaperone family.

It is found in the periplasm. Its function is as follows. Involved in the biogenesis of the AAF/I fimbriae. In Escherichia coli, this protein is Chaperone protein AggD (aggD).